Reading from the N-terminus, the 457-residue chain is Exodeoxyribonuclease 7 large subunit (457 aa).

It belongs to the XseA family. Heterooligomer composed of large and small subunits.

The protein resides in the cytoplasm. The enzyme catalyses Exonucleolytic cleavage in either 5'- to 3'- or 3'- to 5'-direction to yield nucleoside 5'-phosphates.. Bidirectionally degrades single-stranded DNA into large acid-insoluble oligonucleotides, which are then degraded further into small acid-soluble oligonucleotides. The sequence is that of Exodeoxyribonuclease 7 large subunit from Citrobacter koseri (strain ATCC BAA-895 / CDC 4225-83 / SGSC4696).